A 628-amino-acid polypeptide reads, in one-letter code: Phosphomethylpyrimidine synthase (628 aa).

Substrate-binding positions include N229, M258, Y287, H323, 343-345, 384-387, and E423; these read SRG and DGLR. H427 contacts Zn(2+). Y450 lines the substrate pocket. H491 contributes to the Zn(2+) binding site. C571, C574, and C579 together coordinate [4Fe-4S] cluster.

Belongs to the ThiC family. As to quaternary structure, homodimer. It depends on [4Fe-4S] cluster as a cofactor.

It catalyses the reaction 5-amino-1-(5-phospho-beta-D-ribosyl)imidazole + S-adenosyl-L-methionine = 4-amino-2-methyl-5-(phosphooxymethyl)pyrimidine + CO + 5'-deoxyadenosine + formate + L-methionine + 3 H(+). Its pathway is cofactor biosynthesis; thiamine diphosphate biosynthesis. In terms of biological role, catalyzes the synthesis of the hydroxymethylpyrimidine phosphate (HMP-P) moiety of thiamine from aminoimidazole ribotide (AIR) in a radical S-adenosyl-L-methionine (SAM)-dependent reaction. In Variovorax paradoxus (strain S110), this protein is Phosphomethylpyrimidine synthase.